We begin with the raw amino-acid sequence, 238 residues long: Aspirochlorine biosynthesis protein N (238 aa).

It belongs to the asaB hydroxylase/desaturase family.

It functions in the pathway mycotoxin biosynthesis. Part of the gene cluster that mediates the biosynthesis of aspirochlorine (or antibiotic A30641), an unusual halogenated spiro compound with distinctive antifungal properties due to selective inhibition of protein biosynthesis, and which is also active against bacteria, viruses, and murine tumor cells. The non-ribosomal peptide synthetase (NRPS) aclP is responsible the formation of the diketopiperazine (DKP) core from the condensation of 2 phenylalanine residues. One Phe residue is tailored into chlorotyrosine by hydroxylation and chlorination, whereas the second Phe undergoes an unprecedented C-C bond cleavage to be converted into glycine. After formation of the DKP, sulfur is incorporated into the DKP by conjugation with glutathione by aclG, followed by its stepwise degradation to the thiol by aclI, aclJ and aclK, and the dithiol oxidation by aclT. In addition, oxygenases (aclB, aclC, aclL and aclO) and O-methyltransferases (aclM and aclU) act as tailoring enzymes to produce the intermediate dechloroaspirochlorine. Ultimately, chlorination of dechloroaspirochlorine by the halogenase aclH is the last step in the aspirochlorine pathway. This chain is Aspirochlorine biosynthesis protein N, found in Aspergillus oryzae (strain ATCC 42149 / RIB 40) (Yellow koji mold).